The primary structure comprises 325 residues: Natural cytotoxicity triggering receptor 1 (325 aa).

The signal sequence occupies residues 1–16 (MLPTLTALLCLGLCLS). Over 17–255 (QRINTEKETL…SAFWDHTTQN (239 aa)) the chain is Extracellular. 2 consecutive Ig-like domains span residues 34 to 118 (KPSI…LVVT) and 129 to 211 (YPRP…LLIT). Cys-49 and Cys-98 are oxidised to a cystine. Residue Asn-139 is glycosylated (N-linked (GlcNAc...) asparagine). A disulfide bond links Cys-144 and Cys-190. N-linked (GlcNAc...) asparagine glycans are attached at residues Asn-216 and Asn-238. The helical transmembrane segment at 256 to 273 (LIRIGLACIILITLVWLL) threads the bilayer. The Cytoplasmic portion of the chain corresponds to 274-325 (TEDWLSKRKDHEEANRLTNWECRRRWRMQHYFEEEQRNAISMMELKATPGAL).

The protein belongs to the natural cytotoxicity receptor (NCR) family. Interacts with CD3Z and FCER1G. Selectively expressed by NK cells.

The protein resides in the cell membrane. Functionally, cytotoxicity-activating receptor that may contribute to the increased efficiency of activated natural killer (NK) cells to mediate tumor cell lysis. The chain is Natural cytotoxicity triggering receptor 1 (Ncr1) from Mus musculus (Mouse).